We begin with the raw amino-acid sequence, 860 residues long: DNA mismatch repair protein MutS (860 aa).

607–614 (GPNMSGKS) contributes to the ATP binding site.

This sequence belongs to the DNA mismatch repair MutS family.

Functionally, this protein is involved in the repair of mismatches in DNA. It is possible that it carries out the mismatch recognition step. This protein has a weak ATPase activity. The chain is DNA mismatch repair protein MutS from Listeria monocytogenes serovar 1/2a (strain ATCC BAA-679 / EGD-e).